The following is a 345-amino-acid chain: Anthranilate phosphoribosyltransferase (345 aa).

5-phospho-alpha-D-ribose 1-diphosphate-binding positions include glycine 88, 91–92 (GD), threonine 96, 98–101 (NIST), 116–124 (KHGNRSASG), and serine 128. Position 88 (glycine 88) interacts with anthranilate. Residue serine 100 participates in Mg(2+) binding. Anthranilate is bound at residue asparagine 119. Arginine 174 is an anthranilate binding site. Mg(2+) is bound by residues aspartate 233 and glutamate 234.

This sequence belongs to the anthranilate phosphoribosyltransferase family. Homodimer. Requires Mg(2+) as cofactor.

It carries out the reaction N-(5-phospho-beta-D-ribosyl)anthranilate + diphosphate = 5-phospho-alpha-D-ribose 1-diphosphate + anthranilate. Its pathway is amino-acid biosynthesis; L-tryptophan biosynthesis; L-tryptophan from chorismate: step 2/5. Functionally, catalyzes the transfer of the phosphoribosyl group of 5-phosphorylribose-1-pyrophosphate (PRPP) to anthranilate to yield N-(5'-phosphoribosyl)-anthranilate (PRA). In Prochlorococcus marinus (strain NATL1A), this protein is Anthranilate phosphoribosyltransferase.